Consider the following 910-residue polypeptide: Disease susceptibility protein LOV1 (910 aa).

A coiled-coil region spans residues 22–60; it reads ARLNGIGEQVDGLKRQLGRLQSLLKDADAKKHESERVRN. The 293-residue stretch at 169 to 461 folds into the NB-ARC domain; the sequence is EQSVEALAGH…AAEGIITSSD (293 aa). LRR repeat units lie at residues 584–609, 610–632, 634–655, 700–725, 726–751, and 847–871; these read LPLL…IGDL, IHLR…LRNL, LLLY…LKEM, MTKL…LGQL, RSLE…IVLN, and MPLL…NYIT.

Belongs to the disease resistance NB-LRR family. RPP8/HRT subfamily.

Its function is as follows. Confers susceptibility to the fungus Cochliobolus victoriae by conditioning victorin-dependent (victorin is a toxin synthesized by C.victoriae) induction of defense-associated proteins. The sequence is that of Disease susceptibility protein LOV1 (LOV1) from Arabidopsis thaliana (Mouse-ear cress).